A 381-amino-acid chain; its full sequence is E3 ubiquitin-protein ligase RNF13 (381 aa).

The signal sequence occupies residues 1–34 (MLLSIGMLMLSATQVYTILTVQLFAFLNLLPVEA). The Lumenal segment spans residues 35-182 (DILAYNFENA…VPEFSLPLEY (148 aa)). The 96-residue stretch at 65 to 160 (KGFLINSKPE…GESSANSLKD (96 aa)) folds into the PA domain. Residue Asn88 is glycosylated (N-linked (GlcNAc...) asparagine). A helical membrane pass occupies residues 183–203 (YLIPFLIIVGICLILIVIFMI). Over 204-381 (TKFVQDRHRA…ERDYNIANTV (178 aa)) the chain is Cytoplasmic. Residues 240-282 (CAICLDEYEDGDKLRILPCSHAYHCKCVDPWLTKTKKTCPVCK) form an RING-type; atypical zinc finger. Positions 285–381 (VVPSQGDSDS…ERDYNIANTV (97 aa)) are disordered. Acidic residues-rich tracts occupy residues 292–304 (SDSD…EENE) and 339–357 (SDYE…AENE).

As to quaternary structure, interacts with ERN1. Autoubiquitinated. Widely expressed (at protein level). In normal pancreas, expressed in islets, but not in ducts, nor in acini (at protein level).

The protein localises to the endoplasmic reticulum membrane. The protein resides in the late endosome membrane. It localises to the lysosome membrane. Its subcellular location is the nucleus inner membrane. The enzyme catalyses S-ubiquitinyl-[E2 ubiquitin-conjugating enzyme]-L-cysteine + [acceptor protein]-L-lysine = [E2 ubiquitin-conjugating enzyme]-L-cysteine + N(6)-ubiquitinyl-[acceptor protein]-L-lysine.. The protein operates within protein modification; protein ubiquitination. E3 ubiquitin-protein ligase that regulates cell proliferation. Involved in apoptosis regulation. Mediates ER stress-induced activation of JNK signaling pathway and apoptosis by promoting ERN1 activation and splicing of XBP1 mRNA. Also involved in protein trafficking and localization. The polypeptide is E3 ubiquitin-protein ligase RNF13 (Homo sapiens (Human)).